The chain runs to 369 residues: Methylthioribose-1-phosphate isomerase (369 aa).

Residues 54 to 56 (RGA), Arg95, and Gln208 each bind substrate. Asp249 serves as the catalytic Proton donor. Residue 259-260 (NK) participates in substrate binding.

It belongs to the eIF-2B alpha/beta/delta subunits family. MtnA subfamily.

It carries out the reaction 5-(methylsulfanyl)-alpha-D-ribose 1-phosphate = 5-(methylsulfanyl)-D-ribulose 1-phosphate. Its pathway is amino-acid biosynthesis; L-methionine biosynthesis via salvage pathway; L-methionine from S-methyl-5-thio-alpha-D-ribose 1-phosphate: step 1/6. In terms of biological role, catalyzes the interconversion of methylthioribose-1-phosphate (MTR-1-P) into methylthioribulose-1-phosphate (MTRu-1-P). The chain is Methylthioribose-1-phosphate isomerase from Desulfosudis oleivorans (strain DSM 6200 / JCM 39069 / Hxd3) (Desulfococcus oleovorans).